Here is a 355-residue protein sequence, read N- to C-terminus: Undecaprenyl-phosphate alpha-N-acetylglucosaminyl 1-phosphate transferase (355 aa).

The next 8 membrane-spanning stretches (helical) occupy residues methionine 1–leucine 21, glycine 39–methionine 59, glutamine 63–leucine 83, phenylalanine 123–isoleucine 143, tryptophan 182–phenylalanine 202, valine 208–leucine 228, methionine 237–isoleucine 257, and tryptophan 315–alanine 335.

This sequence belongs to the glycosyltransferase 4 family. WecA subfamily. Requires Mg(2+) as cofactor. Mn(2+) serves as cofactor.

Its subcellular location is the cell inner membrane. The catalysed reaction is di-trans,octa-cis-undecaprenyl phosphate + UDP-N-acetyl-alpha-D-glucosamine = N-acetyl-alpha-D-glucosaminyl-di-trans,octa-cis-undecaprenyl diphosphate + UMP. Its pathway is bacterial outer membrane biogenesis; LPS O-antigen biosynthesis. Catalyzes the transfer of the GlcNAc-1-phosphate moiety from UDP-GlcNAc onto the carrier lipid undecaprenyl phosphate (C55-P), yielding GlcNAc-pyrophosphoryl-undecaprenyl (GlcNAc-PP-C55). The sequence is that of Undecaprenyl-phosphate alpha-N-acetylglucosaminyl 1-phosphate transferase from Haemophilus influenzae (strain ATCC 51907 / DSM 11121 / KW20 / Rd).